The chain runs to 574 residues: Ankyrin repeat protein B18 (574 aa).

6 ANK repeats span residues 56–87 (TGYT…DVTI), 135–164 (IKSR…DPNF), 167–213 (DGYT…NLNA), 217–249 (CGNT…NFEI), 253–285 (HGLT…NVGE), and 327–356 (EGKT…DINA). In terms of domain architecture, F-box spans 541 to 574 (KCLLTLLPSEIIYEILYMLTIYDLYNISYPPTKV).

This is Ankyrin repeat protein B18 from Variola virus (isolate Human/India/Ind3/1967) (VARV).